A 391-amino-acid chain; its full sequence is Inhibin beta B chain (391 aa).

Positions 1–25 (MDGAARRGVLAALLACGLLLLGAAA) are cleaved as a signal peptide. Positions 26 to 276 (TPTPPPAGSS…ADNKHRIRKR (251 aa)) are excised as a propeptide. Positions 27–47 (PTPPPAGSSPQDTCTSCGFRR) are disordered. N-linked (GlcNAc...) asparagine glycosylation is present at Asn77. 4 disulfide bridges follow: Cys280–Cys288, Cys287–Cys356, Cys316–Cys388, and Cys320–Cys390.

This sequence belongs to the TGF-beta family. Dimeric, linked by one or more disulfide bonds. Inhibin A is a dimer of alpha and beta-A. Inhibin B is a dimer of alpha and beta-B. Activin A is a homodimer of beta-A. Activin B is a homodimer of beta-B. Activin AB is a dimer of beta-A and beta-B.

The protein resides in the secreted. In terms of biological role, inhibins and activins inhibit and activate, respectively, the secretion of follitropin by the pituitary gland. Inhibins/activins are involved in regulating a number of diverse functions such as hypothalamic and pituitary hormone secretion, gonadal hormone secretion, germ cell development and maturation, erythroid differentiation, insulin secretion, nerve cell survival, embryonic axial development or bone growth, depending on their subunit composition. Inhibins appear to oppose the functions of activins. The polypeptide is Inhibin beta B chain (INHBB) (Gallus gallus (Chicken)).